We begin with the raw amino-acid sequence, 119 residues long: Large ribosomal subunit protein bL20 (119 aa).

Belongs to the bacterial ribosomal protein bL20 family.

Functionally, binds directly to 23S ribosomal RNA and is necessary for the in vitro assembly process of the 50S ribosomal subunit. It is not involved in the protein synthesizing functions of that subunit. The chain is Large ribosomal subunit protein bL20 from Clostridium kluyveri (strain NBRC 12016).